Reading from the N-terminus, the 445-residue chain is uncharacterized protein (445 aa).

Helical transmembrane passes span 16-36 (IVSLGVTASSFLFINGVAFLI), 52-72 (LLASMPSWGLVVTMFAWGYLL), 98-118 (VHSLLWIGVFLFLGGMAAGGC), 168-188 (GLMFPAVVCTLAAVASVLGIV), 219-239 (ASALLMMPQTVTVTFMLVWLI), 243-263 (GWSVAQAGVLVTISQLLGALG), 283-303 (LIAAAAAATLFLLAAVDNEGS), and 366-386 (AAYPTAWALCGVFPLAAVPLV). A disordered region spans residues 417–445 (AWPNGPRRPGPPGQPRRVRQGGTAITPPT).

The protein belongs to the major facilitator superfamily.

It is found in the cell membrane. This is an uncharacterized protein from Mycobacterium tuberculosis (strain CDC 1551 / Oshkosh).